The primary structure comprises 125 residues: Large ribosomal subunit protein uL22 (125 aa).

This sequence belongs to the universal ribosomal protein uL22 family. In terms of assembly, part of the 50S ribosomal subunit.

Functionally, this protein binds specifically to 23S rRNA; its binding is stimulated by other ribosomal proteins, e.g. L4, L17, and L20. It is important during the early stages of 50S assembly. It makes multiple contacts with different domains of the 23S rRNA in the assembled 50S subunit and ribosome. The globular domain of the protein is located near the polypeptide exit tunnel on the outside of the subunit, while an extended beta-hairpin is found that lines the wall of the exit tunnel in the center of the 70S ribosome. The polypeptide is Large ribosomal subunit protein uL22 (Acetivibrio thermocellus (strain ATCC 27405 / DSM 1237 / JCM 9322 / NBRC 103400 / NCIMB 10682 / NRRL B-4536 / VPI 7372) (Clostridium thermocellum)).